A 137-amino-acid polypeptide reads, in one-letter code: Large ribosomal subunit protein uL16c (137 aa).

The segment at 1–21 is disordered; the sequence is MLSPKRTKFRRHHRGRMKGKA.

It belongs to the universal ribosomal protein uL16 family. Part of the 50S ribosomal subunit.

Its subcellular location is the plastid. It is found in the chloroplast. The chain is Large ribosomal subunit protein uL16c from Tupiella akineta (Green alga).